A 208-amino-acid chain; its full sequence is N-(5'-phosphoribosyl)anthranilate isomerase (208 aa).

The protein belongs to the TrpF family.

The catalysed reaction is N-(5-phospho-beta-D-ribosyl)anthranilate = 1-(2-carboxyphenylamino)-1-deoxy-D-ribulose 5-phosphate. Its pathway is amino-acid biosynthesis; L-tryptophan biosynthesis; L-tryptophan from chorismate: step 3/5. This chain is N-(5'-phosphoribosyl)anthranilate isomerase, found in Nitrosospira multiformis (strain ATCC 25196 / NCIMB 11849 / C 71).